The sequence spans 345 residues: Class I histocompatibility antigen, F10 alpha chain (345 aa).

Positions 1–22 (MGPCGALGLGLLLAAVCGAAAP) are cleaved as a signal peptide. The tract at residues 23-110 (ELHTLRYIQT…ILQRRYNQTG (88 aa)) is alpha-1. Residues 23–301 (ELHTLRYIQT…WEPPQPNLVP (279 aa)) lie on the Extracellular side of the membrane. N59 and N107 each carry an N-linked (GlcNAc...) asparagine glycan. The tract at residues 111–201 (GSHTVQWMYG…EYGKAELGRR (91 aa)) is alpha-2. 2 cysteine pairs are disulfide-bonded: C121–C183 and C221–C277. The alpha-3 stretch occupies residues 202–292 (ERPEVRVWGK…SLPQPGLYSW (91 aa)). Residues 204-293 (PEVRVWGKEA…LPQPGLYSWE (90 aa)) form the Ig-like C1-type domain. The interval 293–301 (EPPQPNLVP) is connecting peptide. Residues 302 to 324 (IVAGVAVAIVAIAIMVGVGFIIY) form a helical membrane-spanning segment. The Cytoplasmic segment spans residues 325-345 (RRHAGKKGKGYNIAPGSNPAI).

Belongs to the MHC class I family. Heterodimer of an alpha chain and a beta chain (beta-2-microglobulin).

The protein localises to the membrane. Functionally, involved in the presentation of foreign antigens to the immune system. This is Class I histocompatibility antigen, F10 alpha chain from Gallus gallus (Chicken).